A 251-amino-acid polypeptide reads, in one-letter code: uncharacterized protein (251 aa).

This is an uncharacterized protein from Haemophilus influenzae (strain ATCC 51907 / DSM 11121 / KW20 / Rd).